We begin with the raw amino-acid sequence, 389 residues long: 1-deoxy-D-xylulose 5-phosphate reductoisomerase (389 aa).

6 residues coordinate NADPH: T10, G11, S12, I13, N38, and N122. Residue K123 participates in 1-deoxy-D-xylulose 5-phosphate binding. E124 contributes to the NADPH binding site. D148 serves as a coordination point for Mn(2+). 1-deoxy-D-xylulose 5-phosphate contacts are provided by S149, E150, S173, and H196. E150 is a binding site for Mn(2+). G202 lines the NADPH pocket. Positions 209, 214, 215, and 218 each coordinate 1-deoxy-D-xylulose 5-phosphate. E218 provides a ligand contact to Mn(2+).

Belongs to the DXR family. It depends on Mg(2+) as a cofactor. Mn(2+) serves as cofactor.

The enzyme catalyses 2-C-methyl-D-erythritol 4-phosphate + NADP(+) = 1-deoxy-D-xylulose 5-phosphate + NADPH + H(+). Its pathway is isoprenoid biosynthesis; isopentenyl diphosphate biosynthesis via DXP pathway; isopentenyl diphosphate from 1-deoxy-D-xylulose 5-phosphate: step 1/6. In terms of biological role, catalyzes the NADPH-dependent rearrangement and reduction of 1-deoxy-D-xylulose-5-phosphate (DXP) to 2-C-methyl-D-erythritol 4-phosphate (MEP). In Wolbachia sp. subsp. Brugia malayi (strain TRS), this protein is 1-deoxy-D-xylulose 5-phosphate reductoisomerase.